Consider the following 949-residue polypeptide: Glycine dehydrogenase (decarboxylating) (949 aa).

Position 704 is an N6-(pyridoxal phosphate)lysine (K704).

The protein belongs to the GcvP family. The glycine cleavage system is composed of four proteins: P, T, L and H. Pyridoxal 5'-phosphate serves as cofactor.

The enzyme catalyses N(6)-[(R)-lipoyl]-L-lysyl-[glycine-cleavage complex H protein] + glycine + H(+) = N(6)-[(R)-S(8)-aminomethyldihydrolipoyl]-L-lysyl-[glycine-cleavage complex H protein] + CO2. Functionally, the glycine cleavage system catalyzes the degradation of glycine. The P protein binds the alpha-amino group of glycine through its pyridoxal phosphate cofactor; CO(2) is released and the remaining methylamine moiety is then transferred to the lipoamide cofactor of the H protein. This Bacteroides fragilis (strain ATCC 25285 / DSM 2151 / CCUG 4856 / JCM 11019 / LMG 10263 / NCTC 9343 / Onslow / VPI 2553 / EN-2) protein is Glycine dehydrogenase (decarboxylating).